The following is a 446-amino-acid chain: Adenylosuccinate synthetase 1 (446 aa).

GTP-binding positions include 20-26 and 48-50; these read GDEGKGK and GHT. The active-site Proton acceptor is the Asp-21. Residues Asp-21 and Gly-48 each coordinate Mg(2+). Residues 21–24, 46–49, Thr-137, Arg-151, Gln-232, Thr-247, and Arg-319 each bind IMP; these read DEGK and NAGH. Residue His-49 is the Proton donor of the active site. A substrate-binding site is contributed by 315–321; the sequence is SVTGRPR. GTP-binding positions include Arg-321, 347 to 349, and 429 to 431; these read KLD and STG.

The protein belongs to the adenylosuccinate synthetase family. In terms of assembly, homodimer. It depends on Mg(2+) as a cofactor.

It is found in the cytoplasm. The enzyme catalyses IMP + L-aspartate + GTP = N(6)-(1,2-dicarboxyethyl)-AMP + GDP + phosphate + 2 H(+). It functions in the pathway purine metabolism; AMP biosynthesis via de novo pathway; AMP from IMP: step 1/2. Its function is as follows. Plays an important role in the de novo pathway of purine nucleotide biosynthesis. Catalyzes the first committed step in the biosynthesis of AMP from IMP. This Cupriavidus pinatubonensis (strain JMP 134 / LMG 1197) (Cupriavidus necator (strain JMP 134)) protein is Adenylosuccinate synthetase 1.